Here is a 231-residue protein sequence, read N- to C-terminus: Large ribosomal subunit protein uL1 (231 aa).

This sequence belongs to the universal ribosomal protein uL1 family. Part of the 50S ribosomal subunit.

Binds directly to 23S rRNA. The L1 stalk is quite mobile in the ribosome, and is involved in E site tRNA release. Functionally, protein L1 is also a translational repressor protein, it controls the translation of the L11 operon by binding to its mRNA. This Alcanivorax borkumensis (strain ATCC 700651 / DSM 11573 / NCIMB 13689 / SK2) protein is Large ribosomal subunit protein uL1.